Consider the following 96-residue polypeptide: Co-chaperonin GroES (96 aa).

Belongs to the GroES chaperonin family. In terms of assembly, heptamer of 7 subunits arranged in a ring. Interacts with the chaperonin GroEL.

The protein localises to the cytoplasm. Together with the chaperonin GroEL, plays an essential role in assisting protein folding. The GroEL-GroES system forms a nano-cage that allows encapsulation of the non-native substrate proteins and provides a physical environment optimized to promote and accelerate protein folding. GroES binds to the apical surface of the GroEL ring, thereby capping the opening of the GroEL channel. This is Co-chaperonin GroES from Leptospira borgpetersenii serovar Hardjo-bovis (strain JB197).